The chain runs to 282 residues: Aspergillopepsin-2 (282 aa).

Positions M1–A18 are cleaved as a signal peptide. 2 consecutive propeptides follow at residues A19–N59 and G99–R109. A compositionally biased stretch (basic residues) spans A27–S39. Residues A27 to G46 are disordered. A Pyrrolidone carboxylic acid modification is found at Q110. Disulfide bonds link C115/C139 and C127/C210.

It belongs to the peptidase G1 family. As to quaternary structure, heterodimer of two noncovalently bound light and heavy chains.

It catalyses the reaction Preferential cleavage in B chain of insulin: 3-Asn-|-Gln-4, 13-Gly-|-Ala-14, and 26-Tyr-|-Thr-27.. In Aspergillus niger, this protein is Aspergillopepsin-2.